Here is a 148-residue protein sequence, read N- to C-terminus: Large ribosomal subunit protein bL9 (148 aa).

The protein belongs to the bacterial ribosomal protein bL9 family.

Functionally, binds to the 23S rRNA. This Clostridium beijerinckii (strain ATCC 51743 / NCIMB 8052) (Clostridium acetobutylicum) protein is Large ribosomal subunit protein bL9.